A 341-amino-acid chain; its full sequence is D-aspartate oxidase (341 aa).

FAD is bound by residues Asp36, Arg37, Thr43, Ser44, Met50, Gly307, Ile311, and Ser312. The short motif at 339 to 341 (SKL) is the Microbody targeting signal element.

It belongs to the DAMOX/DASOX family. In terms of assembly, dimer or tetramer. Interacts with PEX5; the interaction is direct and required for localization of DDO to the peroxisome. FAD is required as a cofactor. Expressed in the small intestine (at protein level). Expressed in the ependymal cell layer of the telencephalic ventricles, hippocampus, thalamus, cerebellum, midbrain region, pons, olfactory bulbs, and cortex. Repressed in the testis. As to expression, expressed in the kidney, liver, stomach, pancreas, uterus, lactating breast, involuting mammary gland, brain, heart, lung, and skin. In terms of tissue distribution, expressed in kidney, liver, pancreas, and in the mammary gland regardless of lactation status.

It localises to the peroxisome matrix. The protein localises to the cytoplasm. Its subcellular location is the cytosol. It catalyses the reaction D-aspartate + O2 + H2O = oxaloacetate + H2O2 + NH4(+). The enzyme catalyses D-glutamate + O2 + H2O = H2O2 + 2-oxoglutarate + NH4(+). With respect to regulation, inhibited by the benzodiazepine olanzapine; chronic systemic administration of the benzodiazepine increases levels of D-aspartate and L-glutamate in the prefrontal cortex. Efficiently inhibited by 5-aminonicotinic acid (5-AN) and 1,4-Dihydropyrido[2,3-b]pyrazine-2,3-dione (DPPD). Inhibited by aminooxyacetic acid, thiolactomycin, anthranilic acid, malonate, meso-tartrate and L-tartrate. Benzoate has no effect on activity. Functionally, selectively catalyzes the oxidative deamination of acidic amino acids. Suppresses the level of D-aspartate in the brain, an amino acid that can act as an agonist for glutamate receptors. Protects the organism from the toxicity of D-amino acids. May also function in the intestine. Selectively catalyzes the oxidative deamination of acidic amino acids. Its function is as follows. Does not exhibit D-aspartate oxidase activity. In Mus musculus (Mouse), this protein is D-aspartate oxidase (Ddo).